The following is a 342-amino-acid chain: N-acetyl-gamma-glutamyl-phosphate reductase (342 aa).

C149 is an active-site residue.

Belongs to the NAGSA dehydrogenase family. Type 1 subfamily.

The protein localises to the cytoplasm. The catalysed reaction is N-acetyl-L-glutamate 5-semialdehyde + phosphate + NADP(+) = N-acetyl-L-glutamyl 5-phosphate + NADPH + H(+). It functions in the pathway amino-acid biosynthesis; L-arginine biosynthesis; N(2)-acetyl-L-ornithine from L-glutamate: step 3/4. In terms of biological role, catalyzes the NADPH-dependent reduction of N-acetyl-5-glutamyl phosphate to yield N-acetyl-L-glutamate 5-semialdehyde. The protein is N-acetyl-gamma-glutamyl-phosphate reductase of Cereibacter sphaeroides (strain ATCC 17025 / ATH 2.4.3) (Rhodobacter sphaeroides).